We begin with the raw amino-acid sequence, 262 residues long: ABSCISIC ACID-INSENSITIVE 5-like protein 3 (262 aa).

Ser-21, Ser-43, and Ser-66 each carry phosphoserine. Thr-104 is modified (phosphothreonine). The bZIP domain occupies 190–253 (VERRQKRMIK…SEPPPDPKWK (64 aa)). Residues 192 to 211 (RRQKRMIKNRESAARSRARK) form a basic motif region. The segment at 218 to 232 (LEIKVSRLEEENEKL) is leucine-zipper. Basic and acidic residues predominate over residues 239–252 (EKILPSEPPPDPKW). Residues 239 to 262 (EKILPSEPPPDPKWKLRRTNSASL) form a disordered region.

It belongs to the bZIP family. ABI5 subfamily. DNA-binding heterodimer with ABI5/DPBF1, DPBF2 or AREB3/DPBF3. Interacts with the AFP proteins AFP2, AFP3 and AFP4. In terms of tissue distribution, predominantly expressed in seeds.

Its subcellular location is the nucleus. Binds to the embryo specification element and the ABA-responsive element (ABRE) of the Dc3 gene promoter and to the ABRE of the Em1 gene promoter. Could participate in abscisic acid-regulated gene expression during seed development. The polypeptide is ABSCISIC ACID-INSENSITIVE 5-like protein 3 (DPBF4) (Arabidopsis thaliana (Mouse-ear cress)).